The following is a 122-amino-acid chain: Holo-[acyl-carrier-protein] synthase (122 aa).

Residues Asp8 and Glu52 each coordinate Mg(2+).

The protein belongs to the P-Pant transferase superfamily. AcpS family. The cofactor is Mg(2+).

It is found in the cytoplasm. The catalysed reaction is apo-[ACP] + CoA = holo-[ACP] + adenosine 3',5'-bisphosphate + H(+). Transfers the 4'-phosphopantetheine moiety from coenzyme A to a Ser of acyl-carrier-protein. This chain is Holo-[acyl-carrier-protein] synthase, found in Lachnoclostridium phytofermentans (strain ATCC 700394 / DSM 18823 / ISDg) (Clostridium phytofermentans).